A 159-amino-acid chain; its full sequence is RNA pyrophosphohydrolase (159 aa).

Residues 6–149 (GFRPNVGIIL…KREVYRRALK (144 aa)) form the Nudix hydrolase domain. Positions 38–59 (GGINDRETPEEALYRELNEEVG) match the Nudix box motif.

It belongs to the Nudix hydrolase family. RppH subfamily. It depends on a divalent metal cation as a cofactor.

Its function is as follows. Accelerates the degradation of transcripts by removing pyrophosphate from the 5'-end of triphosphorylated RNA, leading to a more labile monophosphorylated state that can stimulate subsequent ribonuclease cleavage. In Pseudomonas aeruginosa (strain LESB58), this protein is RNA pyrophosphohydrolase.